Here is a 343-residue protein sequence, read N- to C-terminus: ABC transporter riboflavin-binding protein RfuA (343 aa).

An N-terminal signal peptide occupies residues 1–19 (MNGAVCVLSALIAVFTCFS). Cysteine 20 carries N-palmitoyl cysteine lipidation. Cysteine 20 carries the S-diacylglycerol cysteine lipid modification. Riboflavin-binding positions include 43 to 46 (SPVY), aspartate 124, glutamine 140, tyrosine 176, tryptophan 208, and aspartate 255.

This sequence belongs to the BMP lipoprotein family. Monomer in solution. The complex is probably composed of two ATP-binding proteins (RfuB), two transmembrane proteins (RfuC and RfuD) and a solute-binding protein (RfuA).

Its subcellular location is the cell inner membrane. Its function is as follows. Probably part of the ABC transporter complex RfuABCD involved in riboflavin import. Binds riboflavin. The protein is ABC transporter riboflavin-binding protein RfuA of Treponema pallidum (strain Nichols).